The following is a 293-amino-acid chain: Glutamyl-Q tRNA(Asp) synthetase (293 aa).

Residues 4–8 and Glu-40 each bind L-glutamate; that span reads RYAPS. Residues 7-17 carry the 'HIGH' region motif; sequence PSPSGDLHFGN. Cys-92, Cys-94, Tyr-113, and Cys-117 together coordinate Zn(2+). Tyr-180 and Arg-198 together coordinate L-glutamate. A 'KMSKS' region motif is present at residues 236-240; that stretch reads RLAKR. An ATP-binding site is contributed by Lys-239.

This sequence belongs to the class-I aminoacyl-tRNA synthetase family. GluQ subfamily. Zn(2+) serves as cofactor.

Its function is as follows. Catalyzes the tRNA-independent activation of glutamate in presence of ATP and the subsequent transfer of glutamate onto a tRNA(Asp). Glutamate is transferred on the 2-amino-5-(4,5-dihydroxy-2-cyclopenten-1-yl) moiety of the queuosine in the wobble position of the QUC anticodon. In Corynebacterium glutamicum (strain ATCC 13032 / DSM 20300 / JCM 1318 / BCRC 11384 / CCUG 27702 / LMG 3730 / NBRC 12168 / NCIMB 10025 / NRRL B-2784 / 534), this protein is Glutamyl-Q tRNA(Asp) synthetase.